A 495-amino-acid polypeptide reads, in one-letter code: Rho GTPase-activating protein 19 (495 aa).

A Rho-GAP domain is found at 98 to 304; that stretch reads MSLKRKEKGV…FMIKHSQKLF (207 aa). Disordered regions lie at residues 327 to 362 and 393 to 495; these read KDDL…ETQQ and KHPS…SSSL. Basic and acidic residues-rich tracts occupy residues 350–362, 433–452, and 470–481; these read SRLD…ETQQ, QERK…KENV, and KSLEGQKEESCR.

In terms of biological role, GTPase activator for the Rho-type GTPases by converting them to an inactive GDP-bound state. The protein is Rho GTPase-activating protein 19 (ARHGAP19) of Gallus gallus (Chicken).